Reading from the N-terminus, the 505-residue chain is DEAD-box ATP-dependent RNA helicase 38 (505 aa).

Residues 1–81 are disordered; the sequence is MADGGKPPTP…DQGPPLLDDS (81 aa). The span at 27–44 shows a compositional bias: low complexity; it reads KAAAAAEAASSSSSNEPA. A Q motif motif is present at residues 100-129; sequence AAFEDLKLTPELLKGLHDEMGFSRPSKIQA. The 177-residue stretch at 134 to 310 folds into the Helicase ATP-binding domain; that stretch reads MILTPPYKDL…TRVIKDGNQI (177 aa). Position 147–154 (147–154) interacts with ATP; sequence AHNGSGKT. A DEAD box motif is present at residues 254–257; it reads DEAD. The Helicase C-terminal domain maps to 338–493; it reads VIKDKIFEFG…EVRNWQSEED (156 aa).

The protein belongs to the DEAD box helicase family. DDX19/DBP5 subfamily.

It localises to the cytoplasm. The protein localises to the nucleus. The catalysed reaction is ATP + H2O = ADP + phosphate + H(+). In terms of biological role, ATP-dependent RNA helicase essential for mRNA export from the nucleus. Plays an important role in the positive regulation of CBF/DREB transcription factors. The chain is DEAD-box ATP-dependent RNA helicase 38 from Oryza sativa subsp. japonica (Rice).